Reading from the N-terminus, the 139-residue chain is NADPH-dependent 7-cyano-7-deazaguanine reductase (139 aa).

The active-site Thioimide intermediate is C34. Residue D41 is the Proton donor of the active site. Residues 56–58 (IEL) and 75–76 (HE) contribute to the substrate site.

The protein belongs to the GTP cyclohydrolase I family. QueF type 1 subfamily.

It localises to the cytoplasm. The enzyme catalyses 7-aminomethyl-7-carbaguanine + 2 NADP(+) = 7-cyano-7-deazaguanine + 2 NADPH + 3 H(+). The protein operates within tRNA modification; tRNA-queuosine biosynthesis. Catalyzes the NADPH-dependent reduction of 7-cyano-7-deazaguanine (preQ0) to 7-aminomethyl-7-deazaguanine (preQ1). This Nitrosomonas europaea (strain ATCC 19718 / CIP 103999 / KCTC 2705 / NBRC 14298) protein is NADPH-dependent 7-cyano-7-deazaguanine reductase.